Reading from the N-terminus, the 467-residue chain is Glycosyl hydrolase family 109 protein (467 aa).

Residues 1–31 (MKNFNRRAFLKAAGATTAGLVTSGLILPASA) constitute a signal peptide (tat-type signal). Residues 66-67 (QR), D88, 137-140 (WQWH), 157-158 (EV), and N186 contribute to the NAD(+) site. Substrate is bound by residues Y215, R234, 246–249 (YPTH), and Y328. Y246 is a binding site for NAD(+).

The protein belongs to the Gfo/Idh/MocA family. Glycosyl hydrolase 109 subfamily. The cofactor is NAD(+). Predicted to be exported by the Tat system. The position of the signal peptide cleavage has not been experimentally proven.

In terms of biological role, glycosidase. This is Glycosyl hydrolase family 109 protein from Shewanella woodyi (strain ATCC 51908 / MS32).